A 145-amino-acid polypeptide reads, in one-letter code: D-aminoacyl-tRNA deacylase (145 aa).

The Gly-cisPro motif, important for rejection of L-amino acids motif lies at 137 to 138 (GP).

This sequence belongs to the DTD family. In terms of assembly, homodimer.

The protein resides in the cytoplasm. It carries out the reaction glycyl-tRNA(Ala) + H2O = tRNA(Ala) + glycine + H(+). The enzyme catalyses a D-aminoacyl-tRNA + H2O = a tRNA + a D-alpha-amino acid + H(+). Its function is as follows. An aminoacyl-tRNA editing enzyme that deacylates mischarged D-aminoacyl-tRNAs. Also deacylates mischarged glycyl-tRNA(Ala), protecting cells against glycine mischarging by AlaRS. Acts via tRNA-based rather than protein-based catalysis; rejects L-amino acids rather than detecting D-amino acids in the active site. By recycling D-aminoacyl-tRNA to D-amino acids and free tRNA molecules, this enzyme counteracts the toxicity associated with the formation of D-aminoacyl-tRNA entities in vivo and helps enforce protein L-homochirality. In Serratia proteamaculans (strain 568), this protein is D-aminoacyl-tRNA deacylase.